The primary structure comprises 1377 residues: DNA-directed RNA polymerase subunit beta' (1377 aa).

Residues Cys-60, Cys-62, Cys-75, and Cys-78 each coordinate Zn(2+). Asp-449, Asp-451, and Asp-453 together coordinate Mg(2+). Positions 777, 851, 858, and 861 each coordinate Zn(2+).

Belongs to the RNA polymerase beta' chain family. As to quaternary structure, the RNAP catalytic core consists of 2 alpha, 1 beta, 1 beta' and 1 omega subunit. When a sigma factor is associated with the core the holoenzyme is formed, which can initiate transcription. Mg(2+) is required as a cofactor. Zn(2+) serves as cofactor.

The enzyme catalyses RNA(n) + a ribonucleoside 5'-triphosphate = RNA(n+1) + diphosphate. Functionally, DNA-dependent RNA polymerase catalyzes the transcription of DNA into RNA using the four ribonucleoside triphosphates as substrates. The sequence is that of DNA-directed RNA polymerase subunit beta' from Borreliella burgdorferi (strain ATCC 35210 / DSM 4680 / CIP 102532 / B31) (Borrelia burgdorferi).